Here is a 135-residue protein sequence, read N- to C-terminus: MKCGKIKADIMDDGGTNMKIYVHTAEKKENGWYFLCEASLQGLQAKRHMLVDSDACAFAYILEAADAFVYVIMPKEVWGAIKEALRTNEPVFLVGNDATIELEGIHEEVAYLIENIAGNANYGEEMEQAVTAFFE.

Belongs to the UPF0738 family.

In Anoxybacillus flavithermus (strain DSM 21510 / WK1), this protein is UPF0738 protein Aflv_2116.